We begin with the raw amino-acid sequence, 532 residues long: Metal-staphylopine-binding protein CntA (532 aa).

An N-terminal signal peptide occupies residues 1-20 (MRKLTKMSAMLLASGLILTG). Residue Cys21 is the site of N-palmitoyl cysteine attachment. The S-diacylglycerol cysteine moiety is linked to residue Cys21. Staphylopine-binding residues include Arg165, Arg418, and Asn448.

Belongs to the bacterial solute-binding protein 5 family. As to quaternary structure, the complex is composed of two ATP-binding proteins (CntD and CntF), two transmembrane proteins (CntB and CntC) and a solute-binding protein (CntA).

The protein resides in the cell membrane. Its function is as follows. Part of the ABC transporter complex CntABCDF (Opp1) involved in the uptake of metal in complex with the metallophore staphylopine (StP). May be involved in the import of a large array of divalent metals ions such as nickel, cobalt, zinc, copper and iron. Binds the metal via the metallophore StP, and transfers the StP-metal complex to the membrane-bound permease. The polypeptide is Metal-staphylopine-binding protein CntA (Staphylococcus aureus (strain Mu50 / ATCC 700699)).